A 245-amino-acid chain; its full sequence is UPF0246 protein Cgl1995/cg2186 (245 aa).

The protein belongs to the UPF0246 family.

The protein is UPF0246 protein Cgl1995/cg2186 of Corynebacterium glutamicum (strain ATCC 13032 / DSM 20300 / JCM 1318 / BCRC 11384 / CCUG 27702 / LMG 3730 / NBRC 12168 / NCIMB 10025 / NRRL B-2784 / 534).